The sequence spans 300 residues: MLEKGEHIEYPNTPPLHSPPESHTFSSQTDDSYFHKPSSTGLFATLVADTNSSVPSASRSPESIASSQSNDSAAIPSYRRKRRKVRKPEIVKPTLRKRGRKPKNISTLEHDKSKPVISSLIDEDANLSQIKARKSVLESRFSRLEEAFRDFYIKNLEKTEDLIRTDSHFVLNKELLSFRNDYEHRRKHYEKYSQCLNKQLDHFFSYKVTTVHKSYQRFATLLRRHLLDKTAKRYHDLCEKRPYKYITTDLLSPSLTCFASDILQTVPEYTSSQSSPVLLPATPSIVTNKQMMDDLTLCNV.

2 disordered regions span residues 1–38 (MLEK…HKPS) and 50–109 (TNSS…STLE). The span at 21–38 (ESHTFSSQTDDSYFHKPS) shows a compositional bias: polar residues. Residues 52–69 (SSVPSASRSPESIASSQS) are compositionally biased toward low complexity. Over residues 94–103 (TLRKRGRKPK) the composition is skewed to basic residues.

It localises to the nucleus. Functionally, has a role in meiosis. The polypeptide is Meiotically up-regulated gene 165 protein (mug165) (Schizosaccharomyces pombe (strain 972 / ATCC 24843) (Fission yeast)).